A 122-amino-acid polypeptide reads, in one-letter code: Small ribosomal subunit protein uS13 (122 aa).

Residues 98 to 122 form a disordered region; that stretch reads VRGQKTKSNARTRKGPRPSRIKKKK. A compositionally biased stretch (basic residues) spans 101 to 122; the sequence is QKTKSNARTRKGPRPSRIKKKK.

Belongs to the universal ribosomal protein uS13 family. Part of the 30S ribosomal subunit. Forms a loose heterodimer with protein S19. Forms two bridges to the 50S subunit in the 70S ribosome.

Its function is as follows. Located at the top of the head of the 30S subunit, it contacts several helices of the 16S rRNA. In the 70S ribosome it contacts the 23S rRNA (bridge B1a) and protein L5 of the 50S subunit (bridge B1b), connecting the 2 subunits; these bridges are implicated in subunit movement. Contacts the tRNAs in the A and P-sites. The chain is Small ribosomal subunit protein uS13 from Thermosipho africanus (strain TCF52B).